The primary structure comprises 473 residues: GTPase Der (473 aa).

EngA-type G domains lie at 3–166 and 177–350; these read PVIA…ENPE and IRIG…ESAM. Residues 9 to 16, 56 to 60, 118 to 121, 183 to 190, 230 to 234, and 295 to 298 contribute to the GTP site; these read GRPNVGKS, DTGGL, NKTD, DTAGV, and NKWD. The 85-residue stretch at 351–435 folds into the KH-like domain; that stretch reads SKWPTNRLTA…PIRFEFKSGE (85 aa). A compositionally biased stretch (basic and acidic residues) spans 444–458; it reads RLTPRQKVKKDNDLK. Residues 444–473 form a disordered region; the sequence is RLTPRQKVKKDNDLKKGRRIKKTRQKSVKR. The segment covering 459–473 has biased composition (basic residues); that stretch reads KGRRIKKTRQKSVKR.

It belongs to the TRAFAC class TrmE-Era-EngA-EngB-Septin-like GTPase superfamily. EngA (Der) GTPase family. In terms of assembly, associates with the 50S ribosomal subunit.

In terms of biological role, GTPase that plays an essential role in the late steps of ribosome biogenesis. The polypeptide is GTPase Der (Marinobacter nauticus (strain ATCC 700491 / DSM 11845 / VT8) (Marinobacter aquaeolei)).